The primary structure comprises 338 residues: tRNA N6-adenosine threonylcarbamoyltransferase (338 aa).

Fe cation-binding residues include histidine 110 and histidine 114. Substrate contacts are provided by residues 132 to 136 (VLSGG), aspartate 165, glycine 178, and asparagine 274. Residue aspartate 298 participates in Fe cation binding.

Belongs to the KAE1 / TsaD family. Requires Fe(2+) as cofactor.

It is found in the cytoplasm. The catalysed reaction is L-threonylcarbamoyladenylate + adenosine(37) in tRNA = N(6)-L-threonylcarbamoyladenosine(37) in tRNA + AMP + H(+). Its function is as follows. Required for the formation of a threonylcarbamoyl group on adenosine at position 37 (t(6)A37) in tRNAs that read codons beginning with adenine. Is involved in the transfer of the threonylcarbamoyl moiety of threonylcarbamoyl-AMP (TC-AMP) to the N6 group of A37, together with TsaE and TsaB. TsaD likely plays a direct catalytic role in this reaction. The protein is tRNA N6-adenosine threonylcarbamoyltransferase of Borrelia duttonii (strain Ly).